The sequence spans 438 residues: Trigger factor (438 aa).

The region spanning 160-245 is the PPIase FKBP-type domain; sequence DDKVTIDFVG…VKKIQQAELP (86 aa).

This sequence belongs to the FKBP-type PPIase family. Tig subfamily.

It is found in the cytoplasm. The enzyme catalyses [protein]-peptidylproline (omega=180) = [protein]-peptidylproline (omega=0). Its function is as follows. Involved in protein export. Acts as a chaperone by maintaining the newly synthesized protein in an open conformation. Functions as a peptidyl-prolyl cis-trans isomerase. The chain is Trigger factor from Francisella tularensis subsp. holarctica (strain OSU18).